Consider the following 266-residue polypeptide: MKINPHNLARLTKKLGYEFNEPLLLVQALTHRSAKGAHNERLEFLGDSILGFVIAEALYDKFPKHDEGDLTRMRSSLVKGVTLAEVARDFNLGECLILGPGELKSGGHHRESILEDAIEAIIGAVYLDSNIECCKALILSWFERRLMVIKPGNEQKDPKTRLQEFLQGRKIPLPTYEVIDTTGQSHNQEFTVRCQTSVISEVVIAKGTSRRKAEQEAAQQILALIEKEREQEKEVKIKPTKQAKLANPRHTKSNPSSSSKKSSTRK.

Positions 8-130 constitute an RNase III domain; that stretch reads LARLTKKLGY…IIGAVYLDSN (123 aa). Glu43 is a binding site for Mg(2+). Residue Asp47 is part of the active site. Residues Asp116 and Glu119 each coordinate Mg(2+). Residue Glu119 is part of the active site. The region spanning 157–227 is the DRBM domain; sequence DPKTRLQEFL…AQQILALIEK (71 aa). The tract at residues 229 to 266 is disordered; the sequence is REQEKEVKIKPTKQAKLANPRHTKSNPSSSSKKSSTRK. A compositionally biased stretch (low complexity) spans 253 to 266; sequence SNPSSSSKKSSTRK.

The protein belongs to the ribonuclease III family. As to quaternary structure, homodimer. Mg(2+) serves as cofactor.

Its subcellular location is the cytoplasm. The enzyme catalyses Endonucleolytic cleavage to 5'-phosphomonoester.. Digests double-stranded RNA. Involved in the processing of primary rRNA transcript to yield the immediate precursors to the large and small rRNAs (23S and 16S). Processes some mRNAs, and tRNAs when they are encoded in the rRNA operon. Processes pre-crRNA and tracrRNA of type II CRISPR loci if present in the organism. The sequence is that of Ribonuclease 3 from Colwellia psychrerythraea (strain 34H / ATCC BAA-681) (Vibrio psychroerythus).